We begin with the raw amino-acid sequence, 480 residues long: Membrane-bound lytic murein transglycosylase F (480 aa).

Residues 1 to 15 (MKKLLFVLLTITLLA) form the signal peptide. The tract at residues 16–259 (SCQKVSVEQT…HLNEKYFAHV (244 aa)) is non-LT domain. The tract at residues 260–480 (KRFDYVDTRA…QENLSGAQPQ (221 aa)) is LT domain. E304 is an active-site residue.

This sequence in the N-terminal section; belongs to the bacterial solute-binding protein 3 family. It in the C-terminal section; belongs to the transglycosylase Slt family.

It is found in the cell outer membrane. It carries out the reaction Exolytic cleavage of the (1-&gt;4)-beta-glycosidic linkage between N-acetylmuramic acid (MurNAc) and N-acetylglucosamine (GlcNAc) residues in peptidoglycan, from either the reducing or the non-reducing ends of the peptidoglycan chains, with concomitant formation of a 1,6-anhydrobond in the MurNAc residue.. Murein-degrading enzyme that degrades murein glycan strands and insoluble, high-molecular weight murein sacculi, with the concomitant formation of a 1,6-anhydromuramoyl product. Lytic transglycosylases (LTs) play an integral role in the metabolism of the peptidoglycan (PG) sacculus. Their lytic action creates space within the PG sacculus to allow for its expansion as well as for the insertion of various structures such as secretion systems and flagella. In Shewanella sediminis (strain HAW-EB3), this protein is Membrane-bound lytic murein transglycosylase F.